Consider the following 705-residue polypeptide: Variediene synthase (705 aa).

The tract at residues 9–331 is terpene cyclase; that stretch reads LNSTLSSVVE…RCPRYHPWLC (323 aa). Aspartate 100 contributes to the Mg(2+) binding site. Substrate-binding positions include aspartate 100, 186-189, asparagine 230, 234-238, and 325-326; these read RIID, SFDIE, and RY. Residues 100–104 carry the DDXXD 1 motif; sequence DNVVE. Positions 230–238 match the NSE/DTE motif; that stretch reads NDYFSFDIE. The tract at residues 332 to 705 is prenyltransferase; that stretch reads KEAASLLHQD…VRLLIHRLKV (374 aa). A compositionally biased stretch (basic and acidic residues) spans 349–366; that stretch reads GRKPQALEEYRSRSHSES. Residues 349-374 form a disordered region; sequence GRKPQALEEYRSRSHSESDLSDASPT. 3 residues coordinate isopentenyl diphosphate: lysine 424, arginine 427, and histidine 456. 2 residues coordinate Mg(2+): aspartate 463 and aspartate 467. The short motif at 463 to 467 is the DDXXD 2 element; the sequence is DDIED. Arginine 472 serves as a coordination point for dimethylallyl diphosphate. Residue arginine 473 coordinates isopentenyl diphosphate. 6 residues coordinate dimethylallyl diphosphate: lysine 550, threonine 551, glutamine 589, asparagine 596, lysine 605, and lysine 615.

This sequence in the N-terminal section; belongs to the terpene synthase family. The protein in the C-terminal section; belongs to the FPP/GGPP synthase family. Hexamer. Mg(2+) serves as cofactor.

The catalysed reaction is isopentenyl diphosphate + (2E,6E)-farnesyl diphosphate = (2E,6E,10E)-geranylgeranyl diphosphate + diphosphate. It carries out the reaction isopentenyl diphosphate + (2E,6E,10E)-geranylgeranyl diphosphate = (2E,6E,10E,14E)-geranylfarnesyl diphosphate + diphosphate. The enzyme catalyses (2E,6E,10E)-geranylgeranyl diphosphate = variediene + diphosphate. It catalyses the reaction (2E,6E,10E,14E)-geranylfarnesyl diphosphate = (R,2E)-alpha-cericerene + diphosphate. It functions in the pathway secondary metabolite biosynthesis; terpenoid biosynthesis. Its function is as follows. Bifunctional terpene synthase that converts dimethylallyl diphosphate (DMAPP) and isopentenyl diphosphate (IPP) into variediene as a single product. The C-terminal prenyltransferase (PT) domain of EvVS catalyzes formation of geranylgeranyl pyrophosphate (GGPP), whereas the N-terminal terpene cyclase (TC) domain catalyzes the cyclization of GGPP to variediene. The PT domain can also synthesize geranylfarnesyl pyrophosphate (GFPP) from the C5 isoprene units in vitro, while the TC domain is able to cyclize GFPP to the sesterterpene (2E)-alpha-cericerene. This is Variediene synthase from Emericella variicolor (Aspergillus stellatus).